The chain runs to 287 residues: Acetyl-coenzyme A carboxylase carboxyl transferase subunit beta (287 aa).

The CoA carboxyltransferase N-terminal domain maps to 28–287 (LWKKCPKCEN…ILSLLTNKVA (260 aa)). Positions 32, 35, 51, and 54 each coordinate Zn(2+). The segment at 32 to 54 (CPKCENVLYRPELEKNLDVCPKC) adopts a C4-type zinc-finger fold.

This sequence belongs to the AccD/PCCB family. In terms of assembly, acetyl-CoA carboxylase is a heterohexamer composed of biotin carboxyl carrier protein (AccB), biotin carboxylase (AccC) and two subunits each of ACCase subunit alpha (AccA) and ACCase subunit beta (AccD). It depends on Zn(2+) as a cofactor.

The protein localises to the cytoplasm. It carries out the reaction N(6)-carboxybiotinyl-L-lysyl-[protein] + acetyl-CoA = N(6)-biotinyl-L-lysyl-[protein] + malonyl-CoA. It functions in the pathway lipid metabolism; malonyl-CoA biosynthesis; malonyl-CoA from acetyl-CoA: step 1/1. In terms of biological role, component of the acetyl coenzyme A carboxylase (ACC) complex. Biotin carboxylase (BC) catalyzes the carboxylation of biotin on its carrier protein (BCCP) and then the CO(2) group is transferred by the transcarboxylase to acetyl-CoA to form malonyl-CoA. The protein is Acetyl-coenzyme A carboxylase carboxyl transferase subunit beta of Marinomonas sp. (strain MWYL1).